A 60-amino-acid chain; its full sequence is Large ribosomal subunit protein bL32 (60 aa).

It belongs to the bacterial ribosomal protein bL32 family.

The protein is Large ribosomal subunit protein bL32 of Borrelia hermsii (strain HS1 / DAH).